Here is a 657-residue protein sequence, read N- to C-terminus: Pentatricopeptide repeat-containing protein CRR2, chloroplastic (657 aa).

The transit peptide at 1-51 directs the protein to the chloroplast; it reads MFLSHPPQVIQPTYHTVNFLPRSPLKPPSCSVALNNPSISSGAGAKISNNQ. 12 PPR repeats span residues 45–75, 76–110, 111–141, 142–176, 177–215, 216–246, 247–277, 284–318, 319–349, 350–384, 385–420, and 421–451; these read AKISNNQLIQSLCKEGKLKQAIRVLSQESSP, SQQTYELLILCCGHRSSLSDALRVHRHILDNGSDQ, DPFLATKLIGMYSDLGSVDYARKVFDKTRKR, TIYVWNALFRALTLAGHGEEVLGLYWKMNRIGVES, DRFTYTYVLKACVASECTVNHLMKGKEIHAHLTRRGYSS, HVYIMTTLVDMYARFGCVDYASYVFGGMPVR, NVVSWSAMIACYAKNGKAFEALRTFREMMRE, NSVTMVSVLQACASLAALEQGKLIHGYILRRGLDS, ILPVISALVTMYGRCGKLEVGQRVFDRMHDR, DVVSWNSLISSYGVHGYGKKAIQIFEEMLANGASP, TPVTFVSVLGACSHEGLVEEGKRLFETMWRDHGIKP, and QIEHYACMVDLLGRANRLDEAAKMVQDMRTE. The interval 456–531 is type E motif; that stretch reads VWGSLLGSCR…LPGRCWMEVR (76 aa). The tract at residues 532-562 is type E(+) motif; sequence RKMYSFVSVDEFNPLMEQIHAFLVKLAEDMK. The segment at 563 to 657 is type DYW motif; sequence EKGYIPQTKG…NGVCSCGDYW (95 aa).

The protein belongs to the PPR family. PCMP-H subfamily.

It is found in the plastid. The protein resides in the chloroplast. Required for the intergenic processing between chloroplast rsp7 and ndhB transcripts. Necessary for chloroplast NADH dehydrogenase-like (NDH) complex-dependent cyclic electron transport around PSI (CET). This Arabidopsis thaliana (Mouse-ear cress) protein is Pentatricopeptide repeat-containing protein CRR2, chloroplastic.